A 163-amino-acid polypeptide reads, in one-letter code: Biotin carboxyl carrier protein of acetyl-CoA carboxylase (163 aa).

Residues 85–161 form the Biotinyl-binding domain; that stretch reads GDFIVSPLVG…QFGSKLFRIV (77 aa). Position 127 is an N6-biotinyllysine (Lys127).

In terms of assembly, homodimer.

It functions in the pathway lipid metabolism; fatty acid biosynthesis. Its function is as follows. This protein is a component of the acetyl coenzyme A carboxylase complex; first, biotin carboxylase catalyzes the carboxylation of the carrier protein and then the transcarboxylase transfers the carboxyl group to form malonyl-CoA. The sequence is that of Biotin carboxyl carrier protein of acetyl-CoA carboxylase (accB) from Chlamydia muridarum (strain MoPn / Nigg).